Here is a 405-residue protein sequence, read N- to C-terminus: Nuclear RNA export factor 2 (405 aa).

The disordered stretch occupies residues 1-33; the sequence is MRGQNRRGYRNIEGRLSLSSHSSHSSPRQTHVT. The segment covering 16–26 has biased composition (low complexity); sequence LSLSSHSSHSS. The RRM domain maps to 26–94; that stretch reads SPRQTHVTNL…SVVLQHIGYK (69 aa). 2 LRR repeats span residues 97–118 and 123–144; these read RISGISFSNNRLCHLDHLSSLS and FLKFLDLSHNQISSGEELKKLG. Positions 215-382 constitute an NTF2 domain; it reads LVEEFIITYY…VAIVSDQLFI (168 aa).

Belongs to the NXF family.

The protein localises to the nucleus. Involved in the export of cellular mRNA to the cytoplasm. Plays a role in the nuclear retention of unspliced mRNAs. The polypeptide is Nuclear RNA export factor 2 (Caenorhabditis elegans).